The following is a 107-amino-acid chain: Iron-binding protein IscA (107 aa).

Fe cation-binding residues include C35, C99, and C101.

This sequence belongs to the HesB/IscA family. Homodimer; may form tetramers and higher multimers. The cofactor is Fe cation.

Its function is as follows. Is able to transfer iron-sulfur clusters to apo-ferredoxin. Multiple cycles of [2Fe2S] cluster formation and transfer are observed, suggesting that IscA acts catalytically. Recruits intracellular free iron so as to provide iron for the assembly of transient iron-sulfur cluster in IscU in the presence of IscS, L-cysteine and the thioredoxin reductase system TrxA/TrxB. In Pectobacterium atrosepticum (strain SCRI 1043 / ATCC BAA-672) (Erwinia carotovora subsp. atroseptica), this protein is Iron-binding protein IscA.